Consider the following 558-residue polypeptide: Suppressor of zyg-1 protein 20 (558 aa).

The SUZ domain maps to 45–146 (KVKAEESSGV…ARNRILGTEY (102 aa)). Disordered stretches follow at residues 50–132 (ESSG…ERQA), 205–241 (FTQPPPSVSESGGVYNGPPGFQQKQPNFQPTLQQQSL), and 374–558 (QRNQ…NRPQ). The segment covering 69–81 (EEPKRVFLRRPKD) has biased composition (basic and acidic residues). Over residues 94–109 (PPTSADTEEQPVTNVR) the composition is skewed to polar residues. Over residues 117-131 (NQKEKQPAPTYEERQ) the composition is skewed to basic and acidic residues. 2 stretches are compositionally biased toward low complexity: residues 374–394 (QRNQVNSYPQQNGAGRGQNRQ) and 424–477 (NNGQ…QQQQ). Composition is skewed to polar residues over residues 478-508 (NKSGKFGQNRNDMQKNNYQPNLQQPPMSQNP) and 545-558 (SASQWPALQQNRPQ).

Interacts (via C-terminus) with atx-2 (via C-terminus); the interaction is RNA independent. Interacts with let-92. In terms of processing, phosphorylated. May be dephosphorylated by let-92.

The protein resides in the cytoplasm. Its subcellular location is the cytoskeleton. The protein localises to the microtubule organizing center. It is found in the centrosome. It localises to the centriole. The protein resides in the nucleus. Its subcellular location is the nucleolus. The protein localises to the chromosome. RNA binding protein that is required for normal cell division and cytokinesis during embryonic development. Functions with RNA-binding protein atx-2 to ensure embryonic cell division, and to this end, plays a role in the regulation of centrosome assembly, position and size, and in astral microtubule outgrowth and nucleation. Furthermore, negatively regulates the levels of the protein kinase zyg-1 at the centrosome. Also involved in ensuring centrosome attachment to the nuclear envelope. This chain is Suppressor of zyg-1 protein 20, found in Caenorhabditis elegans.